We begin with the raw amino-acid sequence, 396 residues long: Pyruvate dehydrogenase E1 component subunit alpha type I, mitochondrial (396 aa).

A mitochondrion-targeting transit peptide spans 1–25; it reads MIFVFANIFKVPTVSPSVMAISVRL. Residues histidine 88, tyrosine 114, arginine 115, glycine 153, glycine 161, valine 163, aspartate 192, glycine 193, alanine 194, asparagine 221, and tyrosine 223 each contribute to the pyruvate site. The thiamine diphosphate site is built by tyrosine 114 and arginine 115. Thiamine diphosphate-binding residues include glycine 161, valine 163, aspartate 192, glycine 193, alanine 194, and asparagine 221. Mg(2+) is bound at residue aspartate 192. Mg(2+)-binding residues include asparagine 221 and tyrosine 223. Thiamine diphosphate is bound at residue histidine 288. A phosphoserine mark is found at serine 289 and serine 296.

In terms of assembly, heterotetramer of two PDHA1 and two PDHB subunits. The heterotetramer interacts with DLAT, and is part of the multimeric pyruvate dehydrogenase complex that contains multiple copies of pyruvate dehydrogenase (E1), dihydrolipoamide acetyltransferase (DLAT, E2) and lipoamide dehydrogenase (DLD, E3). The cofactor is thiamine diphosphate. Mg(2+) is required as a cofactor.

The protein resides in the mitochondrion matrix. It carries out the reaction N(6)-[(R)-lipoyl]-L-lysyl-[protein] + pyruvate + H(+) = N(6)-[(R)-S(8)-acetyldihydrolipoyl]-L-lysyl-[protein] + CO2. Its activity is regulated as follows. Pyruvate dehydrogenase activity is inhibited by phosphorylation of PDHA1; it is reactivated by dephosphorylation. In terms of biological role, the pyruvate dehydrogenase complex catalyzes the overall conversion of pyruvate to acetyl-CoA and CO(2), and thereby links the glycolytic pathway to the tricarboxylic cycle. In Ascaris suum (Pig roundworm), this protein is Pyruvate dehydrogenase E1 component subunit alpha type I, mitochondrial.